A 305-amino-acid chain; its full sequence is Transcriptional activator protein PfeR (305 aa).

Residues 79–192 (RLLLVEDDPR…ELDARTDALL (114 aa)) enclose the Response regulatory domain. A 4-aspartylphosphate modification is found at D128. Positions 200-301 (LPLAQRRDTR…VRGQGYLLVE (102 aa)) form a DNA-binding region, ompR/PhoB-type.

Post-translationally, phosphorylated by PfeS.

It localises to the cytoplasm. Functionally, member of the two-component regulatory system PfeR/PfeS. Activates expression of the ferric enterobactin receptor. This is Transcriptional activator protein PfeR (pfeR) from Pseudomonas aeruginosa (strain ATCC 15692 / DSM 22644 / CIP 104116 / JCM 14847 / LMG 12228 / 1C / PRS 101 / PAO1).